The sequence spans 308 residues: Probable inositol oxygenase (308 aa).

Residues Arg-49 and 106–108 (DDS) contribute to the substrate site. Fe cation is bound by residues His-119, His-144, and Asp-145. Substrate is bound by residues Lys-148 and 165 to 166 (GD). Fe cation-binding residues include His-217, His-243, and Asp-276. 243–244 (HS) contributes to the substrate binding site.

Belongs to the myo-inositol oxygenase family. It depends on Fe cation as a cofactor.

Its subcellular location is the cytoplasm. The enzyme catalyses myo-inositol + O2 = D-glucuronate + H2O + H(+). Its pathway is polyol metabolism; myo-inositol degradation into D-glucuronate; D-glucuronate from myo-inositol: step 1/1. Its function is as follows. Involved in the biosynthesis of UDP-glucuronic acid (UDP-GlcA), providing nucleotide sugars for cell-wall polymers. May be also involved in plant ascorbate biosynthesis. This chain is Probable inositol oxygenase, found in Oryza sativa subsp. japonica (Rice).